Consider the following 364-residue polypeptide: tRNA 2-selenouridine synthase (364 aa).

Residues 14-137 (LIADTPIIDV…LRQTTIQATI (124 aa)) enclose the Rhodanese domain. The S-selanylcysteine intermediate role is filled by C97.

It belongs to the SelU family. As to quaternary structure, monomer.

It carries out the reaction 5-methylaminomethyl-2-thiouridine(34) in tRNA + selenophosphate + (2E)-geranyl diphosphate + H2O + H(+) = 5-methylaminomethyl-2-selenouridine(34) in tRNA + (2E)-thiogeraniol + phosphate + diphosphate. It catalyses the reaction 5-methylaminomethyl-2-thiouridine(34) in tRNA + (2E)-geranyl diphosphate = 5-methylaminomethyl-S-(2E)-geranyl-thiouridine(34) in tRNA + diphosphate. The enzyme catalyses 5-methylaminomethyl-S-(2E)-geranyl-thiouridine(34) in tRNA + selenophosphate + H(+) = 5-methylaminomethyl-2-(Se-phospho)selenouridine(34) in tRNA + (2E)-thiogeraniol. The catalysed reaction is 5-methylaminomethyl-2-(Se-phospho)selenouridine(34) in tRNA + H2O = 5-methylaminomethyl-2-selenouridine(34) in tRNA + phosphate. Involved in the post-transcriptional modification of the uridine at the wobble position (U34) of tRNA(Lys), tRNA(Glu) and tRNA(Gln). Catalyzes the conversion of 2-thiouridine (S2U-RNA) to 2-selenouridine (Se2U-RNA). Acts in a two-step process involving geranylation of 2-thiouridine (S2U) to S-geranyl-2-thiouridine (geS2U) and subsequent selenation of the latter derivative to 2-selenouridine (Se2U) in the tRNA chain. This is tRNA 2-selenouridine synthase from Escherichia coli (strain 55989 / EAEC).